The sequence spans 378 residues: Probable pectin lyase C (378 aa).

The first 18 residues, 1–18 (MKVPFLQLLCLNAALASA), serve as a signal peptide directing secretion. Intrachain disulfides connect Cys81–Cys100 and Cys90–Cys220. N-linked (GlcNAc...) asparagine glycosylation is present at Asn123. Arg250 is an active-site residue. Cys316 and Cys324 form a disulfide bridge.

This sequence belongs to the polysaccharide lyase 1 family.

Its subcellular location is the secreted. The catalysed reaction is Eliminative cleavage of (1-&gt;4)-alpha-D-galacturonan methyl ester to give oligosaccharides with 4-deoxy-6-O-methyl-alpha-D-galact-4-enuronosyl groups at their non-reducing ends.. Functionally, pectinolytic enzymes consist of four classes of enzymes: pectin lyase, polygalacturonase, pectin methylesterase and rhamnogalacturonase. Among pectinolytic enzymes, pectin lyase is the most important in depolymerization of pectin, since it cleaves internal glycosidic bonds of highly methylated pectins. In Aspergillus niger, this protein is Probable pectin lyase C (pelC).